The chain runs to 397 residues: Elongation factor Tu (397 aa).

A tr-type G domain is found at 10-206 (KPHVNIGTIG…HIDTYIPEPT (197 aa)). Positions 19 to 26 (GHVDHGKT) are G1. 19–26 (GHVDHGKT) serves as a coordination point for GTP. Threonine 26 is a binding site for Mg(2+). The interval 61–65 (GITIS) is G2. The interval 82–85 (DCPG) is G3. GTP contacts are provided by residues 82-86 (DCPGH) and 137-140 (NKCD). Residues 137–140 (NKCD) form a G4 region. Positions 175–177 (SAL) are G5.

The protein belongs to the TRAFAC class translation factor GTPase superfamily. Classic translation factor GTPase family. EF-Tu/EF-1A subfamily. In terms of assembly, monomer.

It is found in the cytoplasm. The enzyme catalyses GTP + H2O = GDP + phosphate + H(+). Its function is as follows. GTP hydrolase that promotes the GTP-dependent binding of aminoacyl-tRNA to the A-site of ribosomes during protein biosynthesis. In Alkaliphilus oremlandii (strain OhILAs) (Clostridium oremlandii (strain OhILAs)), this protein is Elongation factor Tu.